The primary structure comprises 430 residues: 3-phosphoshikimate 1-carboxyvinyltransferase (430 aa).

The segment at 1–20 is disordered; it reads MHATVSPSRVRGRARAPPSK. Residues Lys-20, Ser-21, and Arg-25 each coordinate 3-phosphoshikimate. Lys-20 is a binding site for phosphoenolpyruvate. Phosphoenolpyruvate is bound by residues Gly-91 and Arg-119. Residues Ser-164, Ser-165, Gln-166, Ser-192, Asp-312, and Lys-339 each contribute to the 3-phosphoshikimate site. Phosphoenolpyruvate is bound at residue Gln-166. The active-site Proton acceptor is the Asp-312. Residues Arg-343 and Arg-386 each contribute to the phosphoenolpyruvate site.

Belongs to the EPSP synthase family. Monomer.

The protein resides in the cytoplasm. It catalyses the reaction 3-phosphoshikimate + phosphoenolpyruvate = 5-O-(1-carboxyvinyl)-3-phosphoshikimate + phosphate. Its pathway is metabolic intermediate biosynthesis; chorismate biosynthesis. Functionally, catalyzes the transfer of the enolpyruvyl moiety of phosphoenolpyruvate (PEP) to the 5-hydroxyl of shikimate-3-phosphate (S3P) to produce enolpyruvyl shikimate-3-phosphate and inorganic phosphate. This is 3-phosphoshikimate 1-carboxyvinyltransferase from Halobacterium salinarum (strain ATCC 29341 / DSM 671 / R1).